The primary structure comprises 284 residues: Proteasome subunit beta (284 aa).

A propeptide spans 1–56 (removed in mature form; by autocatalysis); it reads MSPMESSSTRFPGQALPAAYLTPGSSSFTDFLRVAAPELMPGSRPVPDGAVEAPHG. The Nucleophile role is filled by Thr57.

It belongs to the peptidase T1B family. In terms of assembly, the 20S proteasome core is composed of 14 alpha and 14 beta subunits that assemble into four stacked heptameric rings, resulting in a barrel-shaped structure. The two inner rings, each composed of seven catalytic beta subunits, are sandwiched by two outer rings, each composed of seven alpha subunits. The catalytic chamber with the active sites is on the inside of the barrel. Has a gated structure, the ends of the cylinder being occluded by the N-termini of the alpha-subunits. Is capped by the proteasome-associated ATPase, ARC.

The protein resides in the cytoplasm. It catalyses the reaction Cleavage of peptide bonds with very broad specificity.. It participates in protein degradation; proteasomal Pup-dependent pathway. With respect to regulation, the formation of the proteasomal ATPase ARC-20S proteasome complex, likely via the docking of the C-termini of ARC into the intersubunit pockets in the alpha-rings, may trigger opening of the gate for substrate entry. Interconversion between the open-gate and close-gate conformations leads to a dynamic regulation of the 20S proteasome proteolysis activity. In terms of biological role, component of the proteasome core, a large protease complex with broad specificity involved in protein degradation. This chain is Proteasome subunit beta, found in Saccharopolyspora erythraea (strain ATCC 11635 / DSM 40517 / JCM 4748 / NBRC 13426 / NCIMB 8594 / NRRL 2338).